The chain runs to 382 residues: Beta-1,4-galactosyltransferase 6 (382 aa).

At 1–15 the chain is on the cytoplasmic side; that stretch reads MSALKRMMRVSNRSL. A helical; Signal-anchor for type II membrane protein transmembrane segment spans residues 16–35; that stretch reads IAFIFFFSLSTSCLYFIYVA. Residues 36–382 are Lumenal-facing; that stretch reads PGIANTYLFM…MPELAPIEDY (347 aa). 6 N-linked (GlcNAc...) asparagine glycosylation sites follow: asparagine 71, asparagine 75, asparagine 83, asparagine 84, asparagine 99, and asparagine 122. The cysteines at positions 108 and 152 are disulfide-linked. UDP-alpha-D-galactose-binding positions include 163–167, 202–204, 229–230, tyrosine 258, and tryptophan 290; these read PFRNR, FNR, and VD. Cysteine 223 and cysteine 242 are oxidised to a cystine. Mn(2+) is bound at residue aspartate 230. Residue 292-295 participates in N-acetyl-D-glucosamine binding; the sequence is GEDD. Asparagine 307 carries an N-linked (GlcNAc...) asparagine glycan. Histidine 323 lines the Mn(2+) pocket. 323–324 contributes to the UDP-alpha-D-galactose binding site; that stretch reads HH. Arginine 334 provides a ligand contact to N-acetyl-D-glucosamine. N-linked (GlcNAc...) asparagine glycosylation is present at asparagine 367.

This sequence belongs to the glycosyltransferase 7 family. Mn(2+) serves as cofactor. The cofactor is Mg(2+). Ca(2+) is required as a cofactor. Brain and kidney.

Its subcellular location is the golgi apparatus. The protein resides in the golgi stack membrane. It catalyses the reaction a beta-D-glucosyl-(1&lt;-&gt;1')-N-acylsphing-4-enine + UDP-alpha-D-galactose = a beta-D-Gal-(1-&gt;4)-beta-D-Glc-(1&lt;-&gt;1)-Cer(d18:1(4E)) + UDP + H(+). It functions in the pathway protein modification; protein glycosylation. Its pathway is sphingolipid metabolism. Inhibited by EDTA. Functionally, catalyzes the synthesis of lactosylceramide (LacCer) via the transfer of galactose from UDP-galactose to glucosylceramide (GlcCer). LacCer is the starting point in the biosynthesis of all gangliosides (membrane-bound glycosphingolipids) which play pivotal roles in the CNS including neuronal maturation and axonal and myelin formation. This is Beta-1,4-galactosyltransferase 6 from Mus musculus (Mouse).